Here is an 85-residue protein sequence, read N- to C-terminus: Small ribosomal subunit protein bS16 (85 aa).

Belongs to the bacterial ribosomal protein bS16 family.

In Buchnera aphidicola subsp. Schizaphis graminum (strain Sg), this protein is Small ribosomal subunit protein bS16.